The primary structure comprises 487 residues: Arginine ADP-riboxanase OspC3 (487 aa).

Residues Met-1–Asn-14 are compositionally biased toward polar residues. Residues Met-1–Ala-41 are disordered. NAD(+)-binding residues include His-137, Gln-138, Ser-139, Ser-164, Asn-167, and Thr-168. The active site involves Glu-325. ANK repeat units lie at residues Asp-368–Asp-398 and Arg-444–Leu-473.

Belongs to the OspC family.

The protein localises to the secreted. Its subcellular location is the host cytoplasm. The catalysed reaction is L-arginyl-[protein] + NAD(+) = ADP-riboxanated L-argininyl-[protein] + nicotinamide + NH4(+) + H(+). Its function is as follows. ADP-riboxanase effector that inhibits host cell pyroptosis. Acts by mediating arginine ADP-riboxanation of host CASP4/CASP11, blocking CASP4/CASP11 autoprocessing. This prevents CASP4 activation and ability to recognize and cleave GSDMD, thereby inhibiting LPS-induced pyroptosis. ADP-riboxanation takes place in two steps: OspC3 first catalyzes ADP-ribosylation of target Arg, and then initiates a deamination to remove one N-omega group. The polypeptide is Arginine ADP-riboxanase OspC3 (Chromobacterium sp. (strain ATCC 53434 / SC 14030)).